The following is a 293-amino-acid chain: Transcription initiation factor IIB 2 (293 aa).

A TFIIB-type zinc finger spans residues 1 to 31 (MKCPYCKTDNAITYDVEKGMYVCTNCASVIE). Positions 3, 6, 23, and 26 each coordinate Zn(2+). Tandem repeats lie at residues 107–193 (SILN…ANSI) and 204–285 (EYIP…DIVD).

It belongs to the TFIIB family.

Stabilizes TBP binding to an archaeal box-A promoter. Also responsible for recruiting RNA polymerase II to the pre-initiation complex (DNA-TBP-TFIIB). This chain is Transcription initiation factor IIB 2, found in Saccharolobus solfataricus (strain ATCC 35092 / DSM 1617 / JCM 11322 / P2) (Sulfolobus solfataricus).